Here is a 149-residue protein sequence, read N- to C-terminus: Putative pre-16S rRNA nuclease (149 aa).

Belongs to the YqgF nuclease family.

The protein resides in the cytoplasm. Could be a nuclease involved in processing of the 5'-end of pre-16S rRNA. The protein is Putative pre-16S rRNA nuclease of Heliobacterium modesticaldum (strain ATCC 51547 / Ice1).